The chain runs to 264 residues: Isoprenyl transferase (264 aa).

Residue Asp43 is part of the active site. Asp43 provides a ligand contact to Mg(2+). Substrate contacts are provided by residues 44–47 (GNGR), Trp48, Arg56, His60, and 88–90 (STE). Residue Asn91 is the Proton acceptor of the active site. Substrate contacts are provided by residues Trp92, Arg94, Arg211, and 217–219 (RTS). Glu230 lines the Mg(2+) pocket.

This sequence belongs to the UPP synthase family. Homodimer. Mg(2+) serves as cofactor.

Its function is as follows. Catalyzes the condensation of isopentenyl diphosphate (IPP) with allylic pyrophosphates generating different type of terpenoids. The sequence is that of Isoprenyl transferase from Bifidobacterium longum (strain NCC 2705).